A 474-amino-acid chain; its full sequence is Cobyric acid synthase (474 aa).

The GATase cobBQ-type domain maps to Thr-251–Tyr-431. Cys-328 serves as the catalytic Nucleophile. Residue His-423 is part of the active site.

Belongs to the CobB/CobQ family. CobQ subfamily.

The protein operates within cofactor biosynthesis; adenosylcobalamin biosynthesis. Functionally, catalyzes amidations at positions B, D, E, and G on adenosylcobyrinic A,C-diamide. NH(2) groups are provided by glutamine, and one molecule of ATP is hydrogenolyzed for each amidation. The polypeptide is Cobyric acid synthase (Deinococcus radiodurans (strain ATCC 13939 / DSM 20539 / JCM 16871 / CCUG 27074 / LMG 4051 / NBRC 15346 / NCIMB 9279 / VKM B-1422 / R1)).